A 203-amino-acid polypeptide reads, in one-letter code: Nucleoside triphosphate pyrophosphatase (203 aa).

Aspartate 78 functions as the Proton acceptor in the catalytic mechanism.

The protein belongs to the Maf family. The cofactor is a divalent metal cation.

The protein localises to the cytoplasm. The enzyme catalyses a ribonucleoside 5'-triphosphate + H2O = a ribonucleoside 5'-phosphate + diphosphate + H(+). It catalyses the reaction a 2'-deoxyribonucleoside 5'-triphosphate + H2O = a 2'-deoxyribonucleoside 5'-phosphate + diphosphate + H(+). In terms of biological role, nucleoside triphosphate pyrophosphatase. May have a dual role in cell division arrest and in preventing the incorporation of modified nucleotides into cellular nucleic acids. The polypeptide is Nucleoside triphosphate pyrophosphatase (Prochlorococcus marinus (strain MIT 9301)).